We begin with the raw amino-acid sequence, 75 residues long: Bacteriocin lactococcin-A (75 aa).

The propeptide occupies 1-21 (MKNQLNFNIVSDEELSEANGG). The helical transmembrane segment at 30-52 (AAGDLYYNTNTHKYVYQQTQNAF) threads the bilayer.

The protein localises to the secreted. The protein resides in the host cell membrane. In terms of biological role, kills Lactococci. The protein is Bacteriocin lactococcin-A (lcnA) of Lactococcus lactis subsp. cremoris (Streptococcus cremoris).